The following is a 289-amino-acid chain: Ribosome-inactivating protein alpha-trichosanthin (289 aa).

An N-terminal signal peptide occupies residues 1–23 (MIRFLVLSLLILTLFLTTPAVEG). Residue glutamate 183 is part of the active site. The propeptide at 271–289 (AMDDDVPMTQSFGCGSYAI) is removed in mature form.

It belongs to the ribosome-inactivating protein family. Type 1 RIP subfamily.

It carries out the reaction Endohydrolysis of the N-glycosidic bond at one specific adenosine on the 28S rRNA.. In terms of biological role, inactivates eukaryotic 60S ribosomal subunits. The polypeptide is Ribosome-inactivating protein alpha-trichosanthin (Trichosanthes kirilowii (Chinese snake gourd)).